Consider the following 1127-residue polypeptide: Glutamate receptor-interacting protein 1 (1127 aa).

A lipid anchor (S-palmitoyl cysteine) is attached at Gln-11. Residue Ser-43 is modified to Phosphoserine. 6 consecutive PDZ domains span residues 53–136, 150–238, 252–336, 471–560, 572–657, and 672–754; these read VVEL…EYEL, TVEV…EYDV, LVEV…LPHH, EVVL…EFDV, HVKL…RKDE, and TVEL…KKQT. Disordered regions lie at residues 752–802, 840–865, and 942–980; these read KQTD…PSVD, KQRTSLSPVPKPRSQTYPDVGLSNED, and MARSQLGRQASFQERSSSRPHYSQTTRSNTLPSDVGRKS. Composition is skewed to polar residues over residues 840–856 and 947–973; these read KQRTSLSPVPKPRSQTY and LGRQASFQERSSSRPHYSQTTRSNTLP. Residues 1003–1085 enclose the PDZ 7 domain; the sequence is KVTLYKDSGM…KLDLVISRNP (83 aa). Residues 1108–1127 form a disordered region; it reads FFQQPSHGGNLETREPTNTL.

In terms of assembly, interacts with EFNB3, GRIA2, GRIA3, GRIPAP1/GRASP1, PPFIA1, PPFIA4, FRAS1, PTPRF, liprins-alpha and the C-terminal tail of PRLHR. Can form homomultimers or heteromultimers with GRIP2. Interacts with EFNB1, EPHA7, EPHB2, KIF5A, KIF5B and KIF5C. Forms a ternary complex with GRIA2 and CSPG4. Interacts with ATAD1 in an ATP-dependent manner. ATAD1-catalyzed ATP hydrolysis disrupts binding to ATAD1 and to GRIA2 and leads to AMPAR complex disassembly. Interacts with SLC30A9 and PLCD4. Interacts with BUD23. Forms a complex with NSG1, GRIA2 and STX12; controls the intracellular fate of AMPAR and the endosomal sorting of the GRIA2 subunit toward recycling and membrane targeting. Interacts with NSG1. In terms of processing, palmitoylation of isoform 2. In terms of tissue distribution, expressed in brain. Isoform 2 is the major isoform in brain. Expressed in oligodendrocyte lineage cells.

It is found in the membrane. It localises to the cytoplasmic vesicle. Its subcellular location is the perikaryon. The protein resides in the cell projection. The protein localises to the dendrite. It is found in the cytoplasm. It localises to the endomembrane system. Its subcellular location is the postsynaptic cell membrane. The protein resides in the postsynaptic density. The protein localises to the endoplasmic reticulum membrane. May play a role as a localized scaffold for the assembly of a multiprotein signaling complex and as mediator of the trafficking of its binding partners at specific subcellular location in neurons. Through complex formation with NSG1, GRIA2 and STX12 controls the intracellular fate of AMPAR and the endosomal sorting of the GRIA2 subunit toward recycling and membrane targeting. In Mus musculus (Mouse), this protein is Glutamate receptor-interacting protein 1 (Grip1).